The chain runs to 305 residues: MLKQRTIKSIVKTVGIGVHSGRKIELTLRPAAPGTGIVFSRVDLPTPVDIPASAMSIGDTRLASVLQKDGVRVSTVEHLMSACAGLGIDNLYVDVTAEEIPIMDGSAATFVFLIQSAGIEEQNAPKRFIKVKKPVEIRDGDKFARLDPYFGFKLKFSIDFRHPAVDKTGQELEVDFATTSYVREIARARTFGFAHEAEMLREIGLARGGSMDNAIVLDEYRILNNDGLRYDDEFVKHKMLDAIGDLYVIGHPLLASYTAYKSGHGLNNALLRELLAHEDAYEIVTFDDPQAAPKGFAFDAQTAFA.

Residues His-78, His-237, and Asp-241 each coordinate Zn(2+). Catalysis depends on His-264, which acts as the Proton donor.

The protein belongs to the LpxC family. Requires Zn(2+) as cofactor.

The enzyme catalyses a UDP-3-O-[(3R)-3-hydroxyacyl]-N-acetyl-alpha-D-glucosamine + H2O = a UDP-3-O-[(3R)-3-hydroxyacyl]-alpha-D-glucosamine + acetate. It participates in glycolipid biosynthesis; lipid IV(A) biosynthesis; lipid IV(A) from (3R)-3-hydroxytetradecanoyl-[acyl-carrier-protein] and UDP-N-acetyl-alpha-D-glucosamine: step 2/6. Catalyzes the hydrolysis of UDP-3-O-myristoyl-N-acetylglucosamine to form UDP-3-O-myristoylglucosamine and acetate, the committed step in lipid A biosynthesis. The protein is UDP-3-O-acyl-N-acetylglucosamine deacetylase of Burkholderia cenocepacia (strain ATCC BAA-245 / DSM 16553 / LMG 16656 / NCTC 13227 / J2315 / CF5610) (Burkholderia cepacia (strain J2315)).